The following is a 235-amino-acid chain: Urease accessory protein UreF (235 aa).

Belongs to the UreF family. In terms of assembly, ureD, UreF and UreG form a complex that acts as a GTP-hydrolysis-dependent molecular chaperone, activating the urease apoprotein by helping to assemble the nickel containing metallocenter of UreC. The UreE protein probably delivers the nickel.

The protein localises to the cytoplasm. Its function is as follows. Required for maturation of urease via the functional incorporation of the urease nickel metallocenter. The sequence is that of Urease accessory protein UreF from Haemophilus influenzae (strain ATCC 51907 / DSM 11121 / KW20 / Rd).